Reading from the N-terminus, the 284-residue chain is NAD kinase (284 aa).

D67 acts as the Proton acceptor in catalysis. NAD(+)-binding positions include D67 to G68, N141 to D142, R152, K169, D171, T182 to S187, and Q241.

The protein belongs to the NAD kinase family. A divalent metal cation serves as cofactor.

Its subcellular location is the cytoplasm. The catalysed reaction is NAD(+) + ATP = ADP + NADP(+) + H(+). Its function is as follows. Involved in the regulation of the intracellular balance of NAD and NADP, and is a key enzyme in the biosynthesis of NADP. Catalyzes specifically the phosphorylation on 2'-hydroxyl of the adenosine moiety of NAD to yield NADP. The protein is NAD kinase of Geotalea daltonii (strain DSM 22248 / JCM 15807 / FRC-32) (Geobacter daltonii).